A 586-amino-acid chain; its full sequence is Phosphomethylpyrimidine synthase (586 aa).

The segment at 1–59 (MKQSVSAEQIELKSSLPGSKKVYVDGPREGMKVPMREIEQSDTNGVPNPPIRVYDTSGP) is disordered. Basic and acidic residues predominate over residues 22–39 (VYVDGPREGMKVPMREIE). Residues Asn193, Met222, Tyr251, His287, 307-309 (SRG), 348-351 (DGLR), and Glu387 each bind substrate. His391 contributes to the Zn(2+) binding site. Tyr414 serves as a coordination point for substrate. Zn(2+) is bound at residue His455. [4Fe-4S] cluster-binding residues include Cys535, Cys538, and Cys543.

It belongs to the ThiC family. Requires [4Fe-4S] cluster as cofactor.

The enzyme catalyses 5-amino-1-(5-phospho-beta-D-ribosyl)imidazole + S-adenosyl-L-methionine = 4-amino-2-methyl-5-(phosphooxymethyl)pyrimidine + CO + 5'-deoxyadenosine + formate + L-methionine + 3 H(+). It participates in cofactor biosynthesis; thiamine diphosphate biosynthesis. Its function is as follows. Catalyzes the synthesis of the hydroxymethylpyrimidine phosphate (HMP-P) moiety of thiamine from aminoimidazole ribotide (AIR) in a radical S-adenosyl-L-methionine (SAM)-dependent reaction. The protein is Phosphomethylpyrimidine synthase of Bacillus cereus (strain Q1).